Consider the following 382-residue polypeptide: S-adenosylmethionine synthase (382 aa).

Residue H16 participates in ATP binding. D18 is a binding site for Mg(2+). K(+) is bound at residue E44. 2 residues coordinate L-methionine: E57 and Q100. The tract at residues 100-110 (QSPDIAQGVDN) is flexible loop. Residues 165–167 (DAK), 231–232 (RF), D240, 246–247 (RK), and K267 each bind ATP. D240 contacts L-methionine. L-methionine is bound at residue K271.

Belongs to the AdoMet synthase family. Homotetramer; dimer of dimers. Requires Mg(2+) as cofactor. It depends on K(+) as a cofactor.

It localises to the cytoplasm. It carries out the reaction L-methionine + ATP + H2O = S-adenosyl-L-methionine + phosphate + diphosphate. Its pathway is amino-acid biosynthesis; S-adenosyl-L-methionine biosynthesis; S-adenosyl-L-methionine from L-methionine: step 1/1. Its function is as follows. Catalyzes the formation of S-adenosylmethionine (AdoMet) from methionine and ATP. The overall synthetic reaction is composed of two sequential steps, AdoMet formation and the subsequent tripolyphosphate hydrolysis which occurs prior to release of AdoMet from the enzyme. This Legionella pneumophila (strain Lens) protein is S-adenosylmethionine synthase.